The sequence spans 282 residues: Putative phosphite transport system permease protein HtxC (282 aa).

The next 4 membrane-spanning stretches (helical) occupy residues histidine 23–isoleucine 43, leucine 81–methionine 101, valine 130–isoleucine 150, and phenylalanine 239–isoleucine 259. The region spanning alanine 77–serine 260 is the ABC transmembrane type-1 domain.

The protein belongs to the binding-protein-dependent transport system permease family.

The protein localises to the cell inner membrane. Functionally, probably forms part of a binding-protein-dependent hypophosphite transporter. The protein is Putative phosphite transport system permease protein HtxC (htxC) of Stutzerimonas stutzeri (Pseudomonas stutzeri).